Reading from the N-terminus, the 146-residue chain is Snaclec 1 (146 aa).

The N-terminal stretch at Met-1–Ala-23 is a signal peptide. 3 disulfides stabilise this stretch: Cys-25–Cys-36, Cys-53–Cys-142, and Cys-119–Cys-134. Positions Tyr-32–Lys-143 constitute a C-type lectin domain.

The protein belongs to the snaclec family. In terms of assembly, heterodimer; disulfide-linked. In terms of tissue distribution, expressed by the venom gland.

It is found in the secreted. Functionally, interferes with one step of hemostasis (modulation of platelet aggregation, or coagulation cascade, for example). In Bitis arietans (African puff adder), this protein is Snaclec 1.